A 515-amino-acid chain; its full sequence is C-glycoside 3-oxidase (515 aa).

An FAD-binding site is contributed by Glu-41. Residues Glu-62–Val-82 are compositionally biased toward basic and acidic residues. The segment at Glu-62–Gln-90 is disordered. FAD-binding residues include Ser-118, Asn-120, Met-124, Thr-129, Ala-131, and Val-237. His-444 functions as the Proton acceptor in the catalytic mechanism. FAD-binding residues include Asn-478 and Thr-490.

It belongs to the GMC oxidoreductase family. Monomer. It depends on FAD as a cofactor.

It catalyses the reaction isoorientin + O2 = 3''-dehydroisoorientin + H2O2. It carries out the reaction mangiferin + O2 = 3'-dehydromangiferin + H2O2. Its function is as follows. FAD-dependent C-glycoside-metabolizing enzyme that participates in the degradation of certain C-glycosides by catalyzing the oxidation of the hydroxyl group at the C3 position of the sugar moiety. Shows oxidase activity toward C-glycosides such as isoorientin and mangiferin but cannot use carminic acid, puerarin, orientin or aloesin. Shows weak activity (100 to 1000-fold lower) with O-glycosides. Probably plays a crucial role in the metabolism of C-glycosides in nature. In Microbacterium trichothecenolyticum (Aureobacterium trichothecenolyticum), this protein is C-glycoside 3-oxidase.